A 906-amino-acid chain; its full sequence is Translation initiation factor IF-2 (906 aa).

Disordered stretches follow at residues 94 to 125 (APEKTEVIPEETENTVEESTAAETVESEPETA), 165 to 232 (ESEA…TGKK), and 270 to 321 (RQEQ…SSEV). Composition is skewed to basic and acidic residues over residues 165–176 (ESEAEKGTEIEK), 222–232 (GPAEARETGKK), and 270–284 (RQEQKRREEAKKREA). Residues 299–313 (QQRRSLKRGGKRKKY) show a composition bias toward basic residues. Positions 405–574 (ERPPVITIMG…LLQAEMMELK (170 aa)) constitute a tr-type G domain. Residues 414 to 421 (GHVDHGKT) form a G1 region. A GTP-binding site is contributed by 414 to 421 (GHVDHGKT). A G2 region spans residues 439 to 443 (GITQH). Residues 460–463 (DTPG) are G3. Residues 460–464 (DTPGH) and 514–517 (NKMD) each bind GTP. Residues 514–517 (NKMD) form a G4 region. The interval 550 to 552 (SAH) is G5.

It belongs to the TRAFAC class translation factor GTPase superfamily. Classic translation factor GTPase family. IF-2 subfamily.

The protein resides in the cytoplasm. Functionally, one of the essential components for the initiation of protein synthesis. Protects formylmethionyl-tRNA from spontaneous hydrolysis and promotes its binding to the 30S ribosomal subunits. Also involved in the hydrolysis of GTP during the formation of the 70S ribosomal complex. The sequence is that of Translation initiation factor IF-2 from Sulfurovum sp. (strain NBC37-1).